We begin with the raw amino-acid sequence, 257 residues long: Gamma-secretase subunit APH-1B (257 aa).

A run of 7 helical transmembrane segments spans residues 5–25 (VFFGCAFIAFGPALALYVFTI), 32–52 (IIFLIAGAFFWLVSLLISSLV), 71–91 (LLIFGAFVSVYIQEMFRFAYY), 115–135 (LLAYVSGLGFGIMSGVFSFVN), 158–178 (YSAFMTLVIILLHVFWGIVFF), 186–206 (WGILLIVLLTHLLVSAQTFIS), and 213–233 (LASAFIILVLMGTWAFLAAGG).

This sequence belongs to the APH-1 family. In terms of assembly, probable component of the gamma-secretase complex, a complex composed of a presenilin homodimer (PSEN1 or PSEN2), nicastrin (NCSTN), APH1 (APH1A or APH1B) and PEN2. Such minimal complex is sufficient for secretase activity, although other components may exist. Interacts with PSEN1 and PSEN2. Weakly or not expressed in leukocytes, lung, placenta, small intestine, liver, kidney, spleen thymus, colon, skeletal muscle, heart and brain.

It localises to the membrane. Its function is as follows. Probable subunit of the gamma-secretase complex, an endoprotease complex that catalyzes the intramembrane cleavage of integral proteins such as Notch receptors and APP (amyloid-beta precursor protein). It probably represents a stabilizing cofactor for the presenilin homodimer that promotes the formation of a stable complex. Probably present in a minority of gamma-secretase complexes compared to APH1A. The chain is Gamma-secretase subunit APH-1B (APH1B) from Homo sapiens (Human).